A 541-amino-acid chain; its full sequence is uncharacterized protein (541 aa).

5 helical membrane passes run Phe-4–Gly-23, Phe-30–Val-47, Val-57–Ala-79, Leu-91–Asn-113, and Leu-156–Ala-178. RCK C-terminal domains follow at residues Gln-187 to Asp-271 and Leu-273 to Asp-354. The next 5 helical transmembrane spans lie at Phe-362–Leu-384, Ala-389–Ser-411, Leu-424–Phe-446, Leu-456–Tyr-478, and Leu-516–Phe-538.

This sequence belongs to the AAE transporter (TC 2.A.81) family.

It is found in the cell membrane. This is an uncharacterized protein from Corynebacterium diphtheriae (strain ATCC 700971 / NCTC 13129 / Biotype gravis).